Here is an 80-residue protein sequence, read N- to C-terminus: Large ribosomal subunit protein bL31 (80 aa).

Zn(2+) is bound by residues Cys16, Cys18, Cys38, and Cys41.

Belongs to the bacterial ribosomal protein bL31 family. Type A subfamily. Part of the 50S ribosomal subunit. The cofactor is Zn(2+).

Functionally, binds the 23S rRNA. The chain is Large ribosomal subunit protein bL31 from Mycobacterium bovis (strain ATCC BAA-935 / AF2122/97).